Reading from the N-terminus, the 432-residue chain is Adenylosuccinate synthetase (432 aa).

GTP-binding positions include 11–17 and 39–41; these read GDEGKGK and GHT. Asp12 (proton acceptor) is an active-site residue. Positions 12 and 39 each coordinate Mg(2+). IMP contacts are provided by residues 12–15, 37–40, Thr134, Arg148, Asn230, Thr245, and Arg309; these read DEGK and NAGH. Residue His40 is the Proton donor of the active site. 305–311 lines the substrate pocket; it reads VTTGRKR. GTP is bound by residues Arg311, 337 to 339, and 419 to 421; these read KLD and GTG.

This sequence belongs to the adenylosuccinate synthetase family. As to quaternary structure, homodimer. The cofactor is Mg(2+).

It is found in the cytoplasm. The enzyme catalyses IMP + L-aspartate + GTP = N(6)-(1,2-dicarboxyethyl)-AMP + GDP + phosphate + 2 H(+). The protein operates within purine metabolism; AMP biosynthesis via de novo pathway; AMP from IMP: step 1/2. Functionally, plays an important role in the de novo pathway and in the salvage pathway of purine nucleotide biosynthesis. Catalyzes the first committed step in the biosynthesis of AMP from IMP. The sequence is that of Adenylosuccinate synthetase from Vanderwaltozyma polyspora (strain ATCC 22028 / DSM 70294 / BCRC 21397 / CBS 2163 / NBRC 10782 / NRRL Y-8283 / UCD 57-17) (Kluyveromyces polysporus).